The sequence spans 1679 residues: Protein MLP2 (1679 aa).

Coiled-coil stretches lie at residues 32-176 (AKFE…KYDT), 233-466 (YNKF…RQVK), 516-1064 (FSNV…EREL), and 1099-1491 (KLVS…ENAG). 3 consecutive short sequence motifs (bipartite nuclear localization signal) follow at residues 417 to 433 (KRSTELLETVSLTKRKQ), 639 to 655 (RKELLIYKKSQCKKKTT), and 1433 to 1449 (KKEWLKEYEDETLRRIK). Disordered stretches follow at residues 1495 to 1521 (FLDNKGSGEDAEEELWNSPSKGNSERP) and 1632 to 1679 (DLTN…ASNE). Polar residues-rich tracts occupy residues 1511-1520 (NSPSKGNSER) and 1646-1661 (IGSTSKRPIESGTSSD). Ser1512 bears the Phosphoserine mark. Residues 1662 to 1671 (PDTKKVKESP) show a composition bias toward basic and acidic residues. At Ser1670 the chain carries Phosphoserine.

As to quaternary structure, component of the nuclear complex (NPC). NPC constitutes the exclusive means of nucleocytoplasmic transport. NPCs allow the passive diffusion of ions and small molecules and the active, nuclear transport receptor-mediated bidirectional transport of macromolecules such as proteins, RNAs, ribonucleoparticles (RNPs), and ribosomal subunits across the nuclear envelope. Due to its 8-fold rotational symmetry, all subunits are present with 8 copies or multiples thereof. Interacts with NUP60 and NIC96, which tether it to the nuclear pore complex. Component of the spindle pole body core in which it interacts directly with SPC110, SPC42 and SPC29. Also interacts with YKU70 (HDF1) and MLP1.

It localises to the nucleus. It is found in the cytoplasm. Its subcellular location is the cytoskeleton. The protein localises to the microtubule organizing center. The protein resides in the spindle pole body. It localises to the nuclear pore complex. In terms of biological role, together with the closely related MLP1, involved in the structural and functional organization of perinuclear chromatin. MLP1/MLP2 associate with the nuclear pore complex and form filamentous structures along the nuclear periphery. Has a role in the localization of Esc1 to nucleolar regions. Together with MLP1, mediates tethering of the some telomeres to the nuclear periphery, probably mediated by YKU70/YKU80 (HDF1/HDF2) heterodimer and show perinuclear location dependent silencing. MLP1 and MLP2 are involved in telomere length regulation but not silencing or telomere anchoring. Plays a role in the incorporation of components into the spindle pole body. Involved in double-strand break repair, probably also mediated by the YKU70/YKU80 (HDF1/HDF2) heterodimer. The polypeptide is Protein MLP2 (MLP2) (Saccharomyces cerevisiae (strain ATCC 204508 / S288c) (Baker's yeast)).